The chain runs to 1249 residues: MAGE-like protein 2 (1249 aa).

The span at methionine 1 to aspartate 10 shows a compositional bias: polar residues. 10 disordered regions span residues methionine 1–aspartate 50, alanine 134–proline 233, glutamine 300–alanine 327, proline 349–threonine 378, arginine 410–alanine 433, glutamine 515–proline 569, glutamine 647–threonine 679, leucine 714–serine 746, proline 862–glycine 910, and valine 930–glycine 957. Pro residues-rich tracts occupy residues proline 40–isoleucine 49 and alanine 140–proline 233. A compositionally biased stretch (low complexity) spans proline 301–proline 311. Composition is skewed to pro residues over residues alanine 312–glutamine 324 and proline 349–proline 358. Residues glutamine 369 to threonine 378 show a composition bias toward polar residues. Positions arginine 410–glutamine 432 are enriched in pro residues. Positions glutamine 525 to proline 552 are enriched in low complexity. Residues alanine 553–proline 567 are compositionally biased toward pro residues. The span at glutamine 662–alanine 675 shows a compositional bias: low complexity. Positions serine 725–serine 746 are enriched in basic and acidic residues. Residues proline 862–alanine 871 show a composition bias toward low complexity. Over residues arginine 881 to histidine 891 the composition is skewed to basic residues. An MAGE domain is found at leucine 1020–alanine 1219. Over residues glutamate 1226 to threonine 1235 the composition is skewed to acidic residues. The segment at glutamate 1226–arginine 1249 is disordered.

As to quaternary structure, part of a complex consisting of MAGEL2, TRIM27 and USP7; directly interacts with USP7. Interacts with TRIM27. Interacts with VPS35; leading to recruitment at retromer-containing endosomes. Interacts with BMAL1 and PER2. As to expression, expressed in placenta, fetal and adult brain. Not detected in heart and small intestine, very low levels in fibroblasts. Not expressed in brain of a Prader-Willi patient.

Its subcellular location is the early endosome. The protein resides in the cytoplasm. It localises to the nucleus. Functionally, probably enhances ubiquitin ligase activity of RING-type zinc finger-containing E3 ubiquitin-protein ligases, possibly through recruitment and/or stabilization of the Ubl-conjugating enzyme (E2) at the E3:substrate complex. Acts as a regulator of retrograde transport via its interaction with VPS35. Recruited to retromer-containing endosomes and promotes the formation of 'Lys-63'-linked polyubiquitin chains at 'Lys-220' of WASHC1 together with TRIM27, leading to promote endosomal F-actin assembly. Regulates the circadian clock by repressing the transcriptional activator activity of the CLOCK-BMAL1 heterodimer. Significantly promotes the cytoplasmic accumulation of CLOCK. This is MAGE-like protein 2 (MAGEL2) from Homo sapiens (Human).